The chain runs to 221 residues: Adenylate kinase (221 aa).

10-15 contacts ATP; it reads GAGKGT. The segment at 30 to 59 is NMP; it reads STGDMLRAAVKAGTPLGVEAKKVMDAGGLV. AMP contacts are provided by residues Thr-31, Arg-36, 57 to 59, 85 to 88, and Gln-92; these read GLV and GFPR. Residues 122–159 are LID; sequence GRRVHVASGRTYHVKYNPPKTEGVDDETGEALIQRDDD. ATP contacts are provided by residues Arg-123 and 132-133; that span reads TY. AMP-binding residues include Arg-156 and Arg-167. Residue Gly-207 coordinates ATP.

Belongs to the adenylate kinase family. As to quaternary structure, monomer.

Its subcellular location is the cytoplasm. The catalysed reaction is AMP + ATP = 2 ADP. It functions in the pathway purine metabolism; AMP biosynthesis via salvage pathway; AMP from ADP: step 1/1. Its function is as follows. Catalyzes the reversible transfer of the terminal phosphate group between ATP and AMP. Plays an important role in cellular energy homeostasis and in adenine nucleotide metabolism. This is Adenylate kinase from Cupriavidus necator (strain ATCC 17699 / DSM 428 / KCTC 22496 / NCIMB 10442 / H16 / Stanier 337) (Ralstonia eutropha).